The following is a 473-amino-acid chain: Cell division protein FtsP (473 aa).

A signal peptide (tat-type signal) is located at residues 1–27 (MSFSRRQFIQVSGLAMCIGAAPLLVRA).

This sequence belongs to the FtsP family. Predicted to be exported by the Tat system. The position of the signal peptide cleavage has not been experimentally proven.

Its subcellular location is the periplasm. In terms of biological role, cell division protein that is required for growth during stress conditions. May be involved in protecting or stabilizing the divisomal assembly under conditions of stress. The sequence is that of Cell division protein FtsP from Photorhabdus laumondii subsp. laumondii (strain DSM 15139 / CIP 105565 / TT01) (Photorhabdus luminescens subsp. laumondii).